Here is a 100-residue protein sequence, read N- to C-terminus: Ubiquitin-related modifier 1 (100 aa).

Gly100 is modified (1-thioglycine). Residue Gly100 forms a Glycyl lysine isopeptide (Gly-Lys) (interchain with K-? in acceptor proteins) linkage.

It belongs to the URM1 family. In terms of processing, C-terminal thiocarboxylation occurs in 2 steps, it is first acyl-adenylated (-COAMP) via the hesA/moeB/thiF part of UBA4, then thiocarboxylated (-COSH) via the rhodanese domain of UBA4.

Its subcellular location is the cytoplasm. It participates in tRNA modification; 5-methoxycarbonylmethyl-2-thiouridine-tRNA biosynthesis. Functionally, acts as a sulfur carrier required for 2-thiolation of mcm(5)S(2)U at tRNA wobble positions of cytosolic tRNA(Lys), tRNA(Glu) and tRNA(Gln). Serves as sulfur donor in tRNA 2-thiolation reaction by being thiocarboxylated (-COSH) at its C-terminus by the MOCS3 homolog UBA4. The sulfur is then transferred to tRNA to form 2-thiolation of mcm(5)S(2)U. Prior mcm(5) tRNA modification by the elongator complex is required for 2-thiolation. Also acts as a ubiquitin-like protein (UBL) that is covalently conjugated via an isopeptide bond to lysine residues of target proteins such as AHP1. The thiocarboxylated form serves as substrate for conjugation and oxidative stress specifically induces the formation of UBL-protein conjugates. This chain is Ubiquitin-related modifier 1, found in Eremothecium gossypii (strain ATCC 10895 / CBS 109.51 / FGSC 9923 / NRRL Y-1056) (Yeast).